We begin with the raw amino-acid sequence, 249 residues long: Phosphate import ATP-binding protein PstB 2 (249 aa).

One can recognise an ABC transporter domain in the interval 4-244 (IEVRDLDLFY…PKDKRTEDYI (241 aa)). Residue 36 to 43 (GPSGCGKS) participates in ATP binding.

The protein belongs to the ABC transporter superfamily. Phosphate importer (TC 3.A.1.7) family. In terms of assembly, the complex is composed of two ATP-binding proteins (PstB), two transmembrane proteins (PstC and PstA) and a solute-binding protein (PstS).

It localises to the cell membrane. It carries out the reaction phosphate(out) + ATP + H2O = ADP + 2 phosphate(in) + H(+). Its function is as follows. Part of the ABC transporter complex PstSACB involved in phosphate import. Responsible for energy coupling to the transport system. This chain is Phosphate import ATP-binding protein PstB 2, found in Caldanaerobacter subterraneus subsp. tengcongensis (strain DSM 15242 / JCM 11007 / NBRC 100824 / MB4) (Thermoanaerobacter tengcongensis).